Here is a 547-residue protein sequence, read N- to C-terminus: Chaperonin GroEL 1 (547 aa).

Residues 30 to 33 (TLGP), K51, 87 to 91 (DGTTT), G415, and D496 each bind ATP.

The protein belongs to the chaperonin (HSP60) family. In terms of assembly, forms a cylinder of 14 subunits composed of two heptameric rings stacked back-to-back. Interacts with the co-chaperonin GroES.

The protein localises to the cytoplasm. The enzyme catalyses ATP + H2O + a folded polypeptide = ADP + phosphate + an unfolded polypeptide.. In terms of biological role, together with its co-chaperonin GroES, plays an essential role in assisting protein folding. The GroEL-GroES system forms a nano-cage that allows encapsulation of the non-native substrate proteins and provides a physical environment optimized to promote and accelerate protein folding. The polypeptide is Chaperonin GroEL 1 (Gluconacetobacter diazotrophicus (strain ATCC 49037 / DSM 5601 / CCUG 37298 / CIP 103539 / LMG 7603 / PAl5)).